The chain runs to 93 residues: U12-lycotoxin-Ls1b (93 aa).

The N-terminal stretch at 1–18 (MKFAVILLFSLVVLAVAS) is a signal peptide. Residues 19-38 (ESVEEVRREIDIEDLPEQQR) constitute a propeptide that is removed on maturation.

This sequence belongs to the neurotoxin 31 family. Post-translationally, contains 5 disulfide bonds. In terms of tissue distribution, expressed by the venom gland.

The protein resides in the secreted. This chain is U12-lycotoxin-Ls1b, found in Lycosa singoriensis (Wolf spider).